The sequence spans 119 residues: Basic phospholipase A2 acanthin-1 (119 aa).

7 cysteine pairs are disulfide-bonded: C11/C71, C27/C118, C29/C45, C44/C99, C51/C92, C60/C85, and C78/C90. Residues Y28, G30, and G32 each coordinate Ca(2+). H48 is a catalytic residue. Residue D49 coordinates Ca(2+). Residue D93 is part of the active site.

Ca(2+) is required as a cofactor. In terms of tissue distribution, expressed by the venom gland.

It is found in the secreted. The catalysed reaction is a 1,2-diacyl-sn-glycero-3-phosphocholine + H2O = a 1-acyl-sn-glycero-3-phosphocholine + a fatty acid + H(+). In terms of biological role, snake venom phospholipase A2 (PLA2) that potently inhibits ADP-(IC(50)=10 nM) and collagen-induced (IC(50)=7 nM) platelet aggregation when tested on human whole blood. PLA2 catalyzes the calcium-dependent hydrolysis of the 2-acyl groups in 3-sn-phosphoglycerides. The protein is Basic phospholipase A2 acanthin-1 of Acanthophis antarcticus (Common death adder).